The chain runs to 901 residues: Protein translocase subunit SecA (901 aa).

ATP is bound by residues Gln87, 105–109 (GEGKT), and Asp512. Zn(2+) contacts are provided by Cys885, Cys887, Cys896, and His897.

This sequence belongs to the SecA family. As to quaternary structure, monomer and homodimer. Part of the essential Sec protein translocation apparatus which comprises SecA, SecYEG and auxiliary proteins SecDF-YajC and YidC. It depends on Zn(2+) as a cofactor.

It localises to the cell inner membrane. Its subcellular location is the cytoplasm. The catalysed reaction is ATP + H2O + cellular proteinSide 1 = ADP + phosphate + cellular proteinSide 2.. Functionally, part of the Sec protein translocase complex. Interacts with the SecYEG preprotein conducting channel. Has a central role in coupling the hydrolysis of ATP to the transfer of proteins into and across the cell membrane, serving both as a receptor for the preprotein-SecB complex and as an ATP-driven molecular motor driving the stepwise translocation of polypeptide chains across the membrane. In Salmonella paratyphi B (strain ATCC BAA-1250 / SPB7), this protein is Protein translocase subunit SecA.